Here is a 344-residue protein sequence, read N- to C-terminus: N-acetyl-gamma-glutamyl-phosphate reductase (344 aa).

Residue Cys149 is part of the active site.

Belongs to the NAGSA dehydrogenase family. Type 1 subfamily.

It is found in the cytoplasm. The enzyme catalyses N-acetyl-L-glutamate 5-semialdehyde + phosphate + NADP(+) = N-acetyl-L-glutamyl 5-phosphate + NADPH + H(+). The protein operates within amino-acid biosynthesis; L-arginine biosynthesis; N(2)-acetyl-L-ornithine from L-glutamate: step 3/4. Catalyzes the NADPH-dependent reduction of N-acetyl-5-glutamyl phosphate to yield N-acetyl-L-glutamate 5-semialdehyde. This is N-acetyl-gamma-glutamyl-phosphate reductase from Acidithiobacillus ferrooxidans (strain ATCC 23270 / DSM 14882 / CIP 104768 / NCIMB 8455) (Ferrobacillus ferrooxidans (strain ATCC 23270)).